A 504-amino-acid polypeptide reads, in one-letter code: Putative BTB/POZ domain-containing protein R842 (504 aa).

Residues 21 to 91 (SDVKLILKDN…FYGFKSPSVT (71 aa)) form the BTB domain.

This sequence belongs to the mimivirus BTB/WD family.

In Acanthamoeba polyphaga (Amoeba), this protein is Putative BTB/POZ domain-containing protein R842.